A 490-amino-acid polypeptide reads, in one-letter code: Serine palmitoyltransferase 2 (490 aa).

The helical transmembrane segment at 10–30 threads the bilayer; the sequence is VDDVGYLPILFLYIAYAFIIF. At Lys321 the chain carries N6-(pyridoxal phosphate)lysine.

The protein belongs to the class-II pyridoxal-phosphate-dependent aminotransferase family. Forms a heterodimer with sptA. The cofactor is pyridoxal 5'-phosphate.

The protein localises to the endoplasmic reticulum membrane. The enzyme catalyses L-serine + hexadecanoyl-CoA + H(+) = 3-oxosphinganine + CO2 + CoA. The protein operates within lipid metabolism; sphingolipid metabolism. Catalytic subunit of serine palmitoyltransferase (SPT), which catalyzes the committed step in the synthesis of sphingolipids, the condensation of serine with palmitoyl CoA to form the long chain base 3-ketosphinganine. The polypeptide is Serine palmitoyltransferase 2 (sptB) (Dictyostelium discoideum (Social amoeba)).